Consider the following 111-residue polypeptide: Inner membrane protein YdgC (111 aa).

At 1–26 (MGLVIKAALGALVVLLIGVLAKTKNY) the chain is on the cytoplasmic side. Residues 27–47 (YIAGLIPLFPTFALIAHYIVA) form a helical membrane-spanning segment. The Periplasmic segment spans residues 48–58 (SERGIEALRAT). Residues 59–79 (IIFSMWSIIPYFVYLVSLWYF) traverse the membrane as a helical segment. Over 80–87 (TGMMRLPA) the chain is Cytoplasmic. Residues 88 to 108 (AFVGSVACWGISAWVLIICWI) traverse the membrane as a helical segment. At 109 to 111 (KLH) the chain is on the periplasmic side.

It to P.aeruginosa GlpM.

It is found in the cell inner membrane. This Escherichia coli O157:H7 protein is Inner membrane protein YdgC (ydgC).